A 160-amino-acid chain; its full sequence is Cytochrome b6-f complex subunit 4 (160 aa).

3 helical membrane passes run 36–56 (LLYI…GLSV), 95–115 (LLGV…PFIE), and 131–151 (TLFL…TLPI).

Belongs to the cytochrome b family. PetD subfamily. The 4 large subunits of the cytochrome b6-f complex are cytochrome b6, subunit IV (17 kDa polypeptide, petD), cytochrome f and the Rieske protein, while the 4 small subunits are petG, petL, petM and petN. The complex functions as a dimer.

The protein resides in the plastid. It localises to the chloroplast thylakoid membrane. Functionally, component of the cytochrome b6-f complex, which mediates electron transfer between photosystem II (PSII) and photosystem I (PSI), cyclic electron flow around PSI, and state transitions. The polypeptide is Cytochrome b6-f complex subunit 4 (Tetradesmus obliquus (Green alga)).